The following is an 862-amino-acid chain: Taxadiene synthase (862 aa).

Residues aspartate 613, aspartate 617, asparagine 757, threonine 761, and glutamate 765 each contribute to the Mg(2+) site. The DDXXD motif signature appears at 613 to 617 (DDMAD).

It belongs to the terpene synthase family. Requires Mg(2+) as cofactor.

The enzyme catalyses (2E,6E,10E)-geranylgeranyl diphosphate = taxa-4(5),11(12)-diene + diphosphate. Its pathway is alkaloid biosynthesis; taxol biosynthesis; taxa-4(20),11-dien-5alpha-ol from geranylgeranyl diphosphate: step 1/2. Functionally, catalyzes the cyclization of the ubiquitous isoprenoid intermediate geranylgeranyl diphosphate to taxa-4,11-diene, the parent olefin with a taxane skeleton. This is Taxadiene synthase (TDC1) from Taxus brevifolia (Pacific yew).